The chain runs to 288 residues: HTH-type transcriptional regulator CzcR (288 aa).

The HTH lysR-type domain occupies 1–58 (MELRDLQIFQSVADQGSVSSAAKELNYVQSNVTTRIKQLENELKTPLFYRHKRGMTLT). Residues 18 to 37 (VSSAAKELNYVQSNVTTRIK) constitute a DNA-binding region (H-T-H motif).

This sequence belongs to the LysR transcriptional regulatory family.

The chain is HTH-type transcriptional regulator CzcR (czcR) from Bacillus thuringiensis subsp. konkukian (strain 97-27).